We begin with the raw amino-acid sequence, 463 residues long: Phosphomethylpyrimidine synthase (463 aa).

Substrate-binding positions include Asn80, Met109, Tyr138, His173, 193-195 (SRG), 234-237 (DGLR), and Glu273. Residue His277 participates in Zn(2+) binding. Position 300 (Tyr300) interacts with substrate. His341 lines the Zn(2+) pocket. [4Fe-4S] cluster is bound by residues Cys421, Cys424, and Cys429.

It belongs to the ThiC family. In terms of assembly, homodimer. The cofactor is [4Fe-4S] cluster.

It catalyses the reaction 5-amino-1-(5-phospho-beta-D-ribosyl)imidazole + S-adenosyl-L-methionine = 4-amino-2-methyl-5-(phosphooxymethyl)pyrimidine + CO + 5'-deoxyadenosine + formate + L-methionine + 3 H(+). The protein operates within cofactor biosynthesis; thiamine diphosphate biosynthesis. Its function is as follows. Catalyzes the synthesis of the hydroxymethylpyrimidine phosphate (HMP-P) moiety of thiamine from aminoimidazole ribotide (AIR) in a radical S-adenosyl-L-methionine (SAM)-dependent reaction. The chain is Phosphomethylpyrimidine synthase from Anaeromyxobacter dehalogenans (strain 2CP-1 / ATCC BAA-258).